The primary structure comprises 211 residues: Ferric nitrobindin-like protein (211 aa).

The short motif at 21 to 27 is the GXWXGXG element; that stretch reads GRWRGPG. The disordered stretch occupies residues 104–130; the sequence is GVVQEGSDTRTEPGGAEPDPAGRRAPS.

The protein belongs to the nitrobindin family.

This Beutenbergia cavernae (strain ATCC BAA-8 / DSM 12333 / CCUG 43141 / JCM 11478 / NBRC 16432 / NCIMB 13614 / HKI 0122) protein is Ferric nitrobindin-like protein.